A 531-amino-acid polypeptide reads, in one-letter code: Acid-sensing ion channel 3 (531 aa).

Residues 1-43 are Cytoplasmic-facing; that stretch reads MKPTSGPEEARRPASDIRVFASNCSMHGLGHVFGPGSLSLRRG. A helical transmembrane segment spans residues 44-61; sequence MWAAAVVLSVATFLYQVA. The Extracellular segment spans residues 62 to 441; the sequence is ERVRYYREFH…SELLGDIGGQ (380 aa). Intrachain disulfides connect Cys92–Cys186, Cys164–Cys171, Cys282–Cys370, Cys315–Cys366, Cys319–Cys364, Cys328–Cys350, and Cys330–Cys342. Asn175 is a glycosylation site (N-linked (GlcNAc...) asparagine). The interval 285–307 is disordered; it reads ASLNPNYEPEPSDPLGSPSPSPS. Asn398 carries N-linked (GlcNAc...) asparagine glycosylation. Residues 442-460 traverse the membrane as a helical segment; that stretch reads MGLFIGASLLTILEILDYL. The GAS motif; ion selectivity filter signature appears at 447 to 449; the sequence is GAS. At 461 to 531 the chain is on the cytoplasmic side; that stretch reads CEVFRDKVLG…HRTCYLVTQL (71 aa). Residues 528–531 carry the PDZ-binding motif; the sequence is VTQL.

The protein belongs to the amiloride-sensitive sodium channel (TC 1.A.6) family. ASIC3 subfamily. Can form homotrimeric channels. Heterotrimer; forms functional heterotrimers producing channel with different properties. Forms heterotrimers with ASIC2; gives rise to a biphasic current with a sustained current which discriminates poorly between Na(+) and K(+). Interacts with STOM; inhibits ASIC3 acid-evoked current. Interacts with LIN7B (via PDZ domain); increases ASIC3 expression at the plasma membrane. Interacts with MAGI1 (via PDZ domain); probably regulates ASIC3. Interacts with GOPC (via PDZ domain); probably regulates ASIC3. Interacts with DLG4 (via PDZ domain); reduces ASIC3 expression at the plasma membrane. Expressed by sensory neurons. Strongly expressed in brain, spinal cord, lung, lymph nodes, kidney, pituitary, heart and testis.

The protein resides in the cell membrane. The protein localises to the cytoplasm. It catalyses the reaction Na(+)(in) = Na(+)(out). It carries out the reaction K(+)(in) = K(+)(out). The catalysed reaction is Ca(2+)(in) = Ca(2+)(out). Inhibited by the diuretic drug amiloride. Inhibited by the diuretic drug triamterene. Potentiated by the vertebrate neuropeptide FF (NPFF) and the related FMRFamide. Specifically and reversibly inhibited by the a sea anemone toxin APETx2. Its function is as follows. Forms pH-gated heterotrimeric sodium channels that act as postsynaptic excitatory receptors in the nervous system. Upon extracellular acidification, these channels generate a biphasic current with a fast inactivating and a slow sustained phase. ASIC3 is more sensitive to protons and gates between closed, open, and desensitized states faster than other ASICs. Displays high selectivity for sodium ions but can also permit the permeation of other cations. As a neuronal acid sensor, probably contributes to mechanoreception, acid nociception, and heat nociception. By forming heterotrimeric channels with ASIC2, generates a biphasic current with a fast inactivating and a slow sustained phase, which in sensory neurons is proposed to mediate the pain induced by acidosis that occurs in ischemic, damaged or inflamed tissues. This is Acid-sensing ion channel 3 from Homo sapiens (Human).